Here is a 309-residue protein sequence, read N- to C-terminus: MSSYPPHEVAQRLASGLLSFPVTHFRADLTFDEPAYREHIGWLGQFGAAGLFAAGGTGEFFSLTPAEVETVVSAAVREVPDGLPVIAPAGYGTAMAVELARAAERAGAHGILLLPPYLTEADQEGLAAHVRAVCAATGLGVILYSRANAVYTETTVARLAEDCPNLVGFKDGVGDIERMTRLYARLGDRLTYVGGLPTAETFALPYLELGVTTYSSAMFNFVPRFALDFYDAVRRRDHAEVRRRLNDFVLPYCDIRNRRAGYAVSIVKAGMKVIGRPAGPVRSPLTDLDDAELAMLADLVKSMPATGEA.

The protein belongs to the DapA family.

It carries out the reaction 5-dehydro-4-deoxy-D-glucarate + H(+) = 2,5-dioxopentanoate + CO2 + H2O. Its pathway is carbohydrate acid metabolism; D-glucarate degradation; 2,5-dioxopentanoate from D-glucarate: step 2/2. The chain is Probable 5-dehydro-4-deoxyglucarate dehydratase from Saccharopolyspora erythraea (strain ATCC 11635 / DSM 40517 / JCM 4748 / NBRC 13426 / NCIMB 8594 / NRRL 2338).